The chain runs to 253 residues: Ribosomal RNA small subunit methyltransferase G (253 aa).

Residues Gly-84, Phe-89, Ala-135–Glu-136, and Arg-154 contribute to the S-adenosyl-L-methionine site. The tract at residues Thr-228–Arg-253 is disordered.

It belongs to the methyltransferase superfamily. RNA methyltransferase RsmG family.

It localises to the cytoplasm. Its function is as follows. Specifically methylates the N7 position of a guanine in 16S rRNA. The polypeptide is Ribosomal RNA small subunit methyltransferase G (Deinococcus radiodurans (strain ATCC 13939 / DSM 20539 / JCM 16871 / CCUG 27074 / LMG 4051 / NBRC 15346 / NCIMB 9279 / VKM B-1422 / R1)).